Consider the following 264-residue polypeptide: Non-homologous end-joining factor xrc4 (264 aa).

Over residues 173–186 (RNNEDNEDNHHINY) the composition is skewed to basic and acidic residues. The disordered stretch occupies residues 173-264 (RNNEDNEDNH…SHESSETVSE (92 aa)). Over residues 200–209 (QEGVNSSAVS) the composition is skewed to polar residues. Basic and acidic residues predominate over residues 248–264 (DDSHRRSSHESSETVSE).

The protein belongs to the XRCC4-XLF family. XRCC4 subfamily. Interacts with lig4; the interaction is direct.

It localises to the nucleus. In terms of biological role, involved in double-strand break repair via non-homologous end joining (NHEJ); the repair of a double-strand break in DNA in which the two broken ends are rejoined with little or no sequence complementarity. The chain is Non-homologous end-joining factor xrc4 from Schizosaccharomyces pombe (strain 972 / ATCC 24843) (Fission yeast).